The chain runs to 146 residues: VHLTDAEKALVTGLWGKVKPDELGGEALGRLLGVYPWTQRFFDSFGDLSSASALMSNAKVKAHGKKVLDSFSEGLKHLDNLKGTFASLSELHCDKLHVDPENFKLLGNMLVLVMAHHLGKDFTPAAQAAYQKVVAGVATALAHKYH.

The residue at position 1 (V1) is an N-acetylvaline. The Globin domain maps to 2–146 (HLTDAEKALV…VATALAHKYH (145 aa)). Phosphothreonine is present on T12. At S44 the chain carries Phosphoserine. Residue K59 is modified to N6-acetyllysine. H63 is a heme b binding site. An N6-acetyllysine modification is found at K82. H92 lines the heme b pocket. C93 bears the S-nitrosocysteine mark. K144 is subject to N6-acetyllysine.

The protein belongs to the globin family. In terms of assembly, heterotetramer of two alpha chains and two beta chains. As to expression, red blood cells.

Functionally, involved in oxygen transport from the lung to the various peripheral tissues. This Peromyscus crinitus (Canyon mouse) protein is Hemoglobin subunit beta.